The sequence spans 360 residues: E3 ubiquitin-protein ligase HAKAI homolog (360 aa).

Basic and acidic residues predominate over residues 1–11 (MLQIRLRRDSP). The disordered stretch occupies residues 1–24 (MLQIRLRRDSPTETGNGARPSPTE). The RING-type zinc-finger motif lies at 72–107 (CVRCDFPIAIYGRLIPCDHAFCLECARSDSICYLCD). The C2H2-type zinc-finger motif lies at 123 to 148 (FICAAPHCLRSFLKKLDFEAHVHDLH). The disordered stretch occupies residues 156–360 (AEKEDGNQSD…QENRDGFGQE (205 aa)). Polar residues-rich tracts occupy residues 163–179 (QSDV…SEST), 186–214 (SQLQ…QNYP), and 270–283 (YPTT…QFFN). Positions 293 to 304 (ESGGSEQSSLLG) are enriched in low complexity.

Belongs to the Hakai family. As to quaternary structure, interacts with MTB and VIR. Associates with MTA, MTB, FIP37 and VIR to form the m6A writer complex which is essential for adenosine methylation at specific mRNA sequences.

The protein resides in the nucleus speckle. It localises to the nucleus. It is found in the nucleoplasm. The catalysed reaction is S-ubiquitinyl-[E2 ubiquitin-conjugating enzyme]-L-cysteine + [acceptor protein]-L-lysine = [E2 ubiquitin-conjugating enzyme]-L-cysteine + N(6)-ubiquitinyl-[acceptor protein]-L-lysine.. In terms of biological role, probable E3 ubiquitin-protein ligase which is a subunit of the N6-methyltransferase complex, a multiprotein complex that mediates N6-methyladenosine (m6A) methylation at the 5'-[AG]GAC-3' consensus sites of some mRNAs. Associates with MTA, MTB, FIP37 and VIR to form the m6A writer complex which is essential for adenosine methylation at specific mRNA sequences. N6-methyladenosine (m6A) plays a role in mRNA stability, processing, translation efficiency and editing. The polypeptide is E3 ubiquitin-protein ligase HAKAI homolog (Arabidopsis thaliana (Mouse-ear cress)).